The chain runs to 423 residues: MVIRSEIVSIGDELLKGQRVNTNASFIASALSDIGIPVVRVVACGDAEEEIMSALRESLERADIVLVTGGLGPTRDDRTLKAAAGLLQRDLKLSPAAFDALQEWFVSRGRKMPEAMRDQARIIEGSLLVPNTTGTAAGMIADAGERFMNHTLVLMPGVPSEMKAMMNQTVIPYFATSSKMVIRHTPVRTLGIGETLLAELVVEVEDHMPEGTTLAYLPHTAGVDLMVSTIGSSVEAVERDNRGVVDALLARTGRYVYATEDVTIEETVGRLLAQRGMTIAVAESCTGGLLASRLTDIAGSSRYFLEGVVVYSNKAKEHFLGVKFETLQLYGAVSPEVAAEMAEGCLFVSGADIAVSTTGIAGPSNESEDKPVGMLCLGVARKEPGGEVSVSTRTLFYHGTREQNKLRFSQAALCEVWESLQDR.

The protein belongs to the CinA family.

This Chlorobium phaeobacteroides (strain DSM 266 / SMG 266 / 2430) protein is CinA-like protein.